We begin with the raw amino-acid sequence, 136 residues long: Histone H3.3C (136 aa).

A compositionally biased stretch (polar residues) spans 1 to 10; sequence MARTKQTACK. Residues 1 to 39 form a disordered region; the sequence is MARTKQTACKSTGRKAPRKQLATKAAHKSAPAMGGVKKP. Arginine 3 is modified (asymmetric dimethylarginine; by PRMT6). At threonine 4 the chain carries Phosphothreonine; by HASPIN. The residue at position 5 (lysine 5) is an Allysine; alternate. Lysine 5 is modified (N6,N6,N6-trimethyllysine; alternate). Lysine 5 carries the N6,N6-dimethyllysine; alternate modification. Lysine 5 carries the N6-(2-hydroxyisobutyryl)lysine; alternate modification. Lysine 5 bears the N6-acetyllysine; alternate mark. Residue lysine 5 is modified to N6-methyllysine; alternate. A 5-glutamyl dopamine; alternate modification is found at glutamine 6. A 5-glutamyl serotonin; alternate modification is found at glutamine 6. Threonine 7 is subject to Phosphothreonine; by PKC. N6-(2-hydroxyisobutyryl)lysine; alternate is present on lysine 10. At lysine 10 the chain carries N6-lactoyllysine; alternate. Lysine 10 carries the N6-methylated lysine modification. Serine 11 carries the post-translational modification ADP-ribosylserine; alternate. Serine 11 carries the phosphoserine; alternate; by AURKB, AURKC, RPS6KA3, RPS6KA4 and RPS6KA5 modification. Position 12 is a phosphothreonine; by PKC (threonine 12). At lysine 15 the chain carries N6-(2-hydroxyisobutyryl)lysine; alternate. Position 15 is an N6-lactoyllysine; alternate (lysine 15). Lysine 15 bears the N6-acetyllysine mark. Lysine 15 carries the post-translational modification N6-glutaryllysine; alternate. Position 18 is an asymmetric dimethylarginine (arginine 18). An N6-(2-hydroxyisobutyryl)lysine; alternate mark is found at lysine 19, lysine 24, and lysine 28. An N6-acetyllysine; alternate modification is found at lysine 19. Lysine 19, lysine 24, and lysine 28 each carry N6-lactoyllysine; alternate. 3 positions are modified to N6-glutaryllysine; alternate: lysine 19, lysine 24, and lysine 28. Residues lysine 19 and lysine 24 each carry the N6-butyryllysine; alternate modification. Lysine 19 carries the post-translational modification N6-methylated lysine; alternate. Residue lysine 24 is modified to N6-acetyllysine. Lysine 28 is subject to N6-acetyllysine; alternate. Lysine 28 is subject to N6-methylated lysine; alternate. The residue at position 29 (serine 29) is an ADP-ribosylserine; alternate. Residue serine 29 is modified to Phosphoserine; alternate; by AURKB, AURKC and RPS6KA5. Lysine 37 bears the N6-(2-hydroxyisobutyryl)lysine; alternate mark. Lysine 37 is modified (N6-acetyllysine; alternate). The residue at position 37 (lysine 37) is an N6-methylated lysine; alternate. Tyrosine 42 is subject to Phosphotyrosine. Lysine 57 carries the N6-(2-hydroxyisobutyryl)lysine; alternate modification. Lysine 57 carries the N6-lactoyllysine; alternate modification. N6-glutaryllysine; alternate is present on lysine 57. Lysine 57 carries the post-translational modification N6-succinyllysine; alternate. Residue serine 58 is modified to Phosphoserine. Lysine 65 and lysine 80 each carry N6-(2-hydroxyisobutyryl)lysine; alternate. Residues lysine 65 and lysine 80 each carry the N6-methylated lysine modification. Residue lysine 80 is modified to N6-lactoyllysine; alternate. Lysine 80 carries the post-translational modification N6-glutaryllysine; alternate. An N6-succinyllysine; alternate modification is found at lysine 80. Threonine 81 is modified (phosphothreonine). N6-acetyllysine; alternate is present on residues lysine 116 and lysine 123. An N6-glutaryllysine; alternate mark is found at lysine 116 and lysine 123. Lysine 123 carries the post-translational modification N6-(2-hydroxyisobutyryl)lysine; alternate. At lysine 123 the chain carries N6-methylated lysine; alternate. Lysine 123 bears the N6-succinyllysine; alternate mark.

Belongs to the histone H3 family. In terms of assembly, the nucleosome is a histone octamer containing two molecules each of H2A, H2B, H3 and H4 assembled in one H3-H4 heterotetramer and two H2A-H2B heterodimers. The octamer wraps approximately 147 bp of DNA. Acetylation is generally linked to gene activation. Acetylation on Lys-19 (H3K18ac) and Lys-24 (H3K24ac) favors methylation at Arg-18 (H3R17me). Acetylation at Lys-123 (H3K122ac) by EP300/p300 plays a central role in chromatin structure: localizes at the surface of the histone octamer and stimulates transcription, possibly by promoting nucleosome instability. Post-translationally, asymmetric dimethylation at Arg-18 (H3R17me2a) is linked to gene activation. Asymmetric dimethylation at Arg-3 (H3R2me2a) by PRMT6 is linked to gene repression and is mutually exclusive with H3 Lys-5 methylation (H3K4me2 and H3K4me3). H3R2me2a is present at the 3' of genes regardless of their transcription state and is enriched on inactive promoters, while it is absent on active promoters. In terms of processing, methylation at Lys-5 (H3K4me) and Lys-80 (H3K79me) are linked to gene activation. Methylation at Lys-5 (H3K4me) facilitates subsequent acetylation of H3 and H4. Methylation at Lys-80 (H3K79me) is associated with DNA double-strand break (DSB) responses and is a specific target for TP53BP1. Methylation at Lys-10 (H3K9me) and Lys-28 (H3K27me) are linked to gene repression. Methylation at Lys-10 (H3K9me) is a specific target for HP1 proteins (CBX1, CBX3 and CBX5) and prevents subsequent phosphorylation at Ser-11 (H3S10ph) and acetylation of H3 and H4. Methylation at Lys-5 (H3K4me) and Lys-80 (H3K79me) require preliminary monoubiquitination of H2B at 'Lys-120'. Phosphorylated at Thr-4 (H3T3ph) by HASPIN during prophase and dephosphorylated during anaphase. Phosphorylation at Ser-11 (H3S10ph) by AURKB is crucial for chromosome condensation and cell-cycle progression during mitosis and meiosis. In addition phosphorylation at Ser-11 (H3S10ph) by RPS6KA4 and RPS6KA5 is important during interphase because it enables the transcription of genes following external stimulation, like mitogens, stress, growth factors or UV irradiation and result in the activation of genes, such as c-fos and c-jun. Phosphorylation at Ser-11 (H3S10ph), which is linked to gene activation, prevents methylation at Lys-10 (H3K9me) but facilitates acetylation of H3 and H4. Phosphorylation at Ser-11 (H3S10ph) by AURKB mediates the dissociation of HP1 proteins (CBX1, CBX3 and CBX5) from heterochromatin. Phosphorylation at Ser-11 (H3S10ph) is also an essential regulatory mechanism for neoplastic cell transformation. Phosphorylated at Ser-29 (H3S28ph) by MAP3K20 isoform 1, RPS6KA5 or AURKB during mitosis or upon ultraviolet B irradiation. Phosphorylation at Thr-7 (H3T6ph) by PRKCB is a specific tag for epigenetic transcriptional activation that prevents demethylation of Lys-5 (H3K4me) by LSD1/KDM1A. At centromeres, specifically phosphorylated at Thr-12 (H3T11ph) from prophase to early anaphase, by DAPK3 and PKN1. Phosphorylation at Thr-12 (H3T11ph) by PKN1 or isoform M2 of PKM (PKM2) is a specific tag for epigenetic transcriptional activation that promotes demethylation of Lys-10 (H3K9me) by KDM4C/JMJD2C. Phosphorylation at Tyr-42 (H3Y41ph) by JAK2 promotes exclusion of CBX5 (HP1 alpha) from chromatin. Post-translationally, lysine deamination at Lys-5 (H3K4all) to form allysine only takes place on H3K4me3 and results in gene repression. In terms of processing, butyrylation of histones marks active promoters and competes with histone acetylation. It is present during late spermatogenesis. Succinylation at Lys-80 (H3K79succ) by KAT2A takes place with a maximum frequency around the transcription start sites of genes. It gives a specific tag for epigenetic transcription activation. Desuccinylation at Lys-123 (H3K122succ) by SIRT7 in response to DNA damage promotes chromatin condensation and double-strand breaks (DSBs) repair. Post-translationally, serine ADP-ribosylation constitutes the primary form of ADP-ribosylation of proteins in response to DNA damage. Serine ADP-ribosylation at Ser-11 (H3S10ADPr) is mutually exclusive with phosphorylation at Ser-11 (H3S10ph) and impairs acetylation at Lys-10 (H3K9ac).

Its subcellular location is the nucleus. The protein resides in the chromosome. In terms of biological role, core component of nucleosome. Nucleosomes wrap and compact DNA into chromatin, limiting DNA accessibility to the cellular machineries which require DNA as a template. Histones thereby play a central role in transcription regulation, DNA repair, DNA replication and chromosomal stability. DNA accessibility is regulated via a complex set of post-translational modifications of histones, also called histone code, and nucleosome remodeling. The chain is Histone H3.3C from Cairina moschata (Muscovy duck).